The sequence spans 634 residues: Chaperone protein DnaK (634 aa).

Threonine 197 carries the phosphothreonine; by autocatalysis modification. A disordered region spans residues 592–634 (IGSSVYQQPGNQPPAPGGPNANASDDKGPDDDVIDADFTETKD). Acidic residues predominate over residues 619 to 634 (GPDDDVIDADFTETKD).

This sequence belongs to the heat shock protein 70 family.

Functionally, acts as a chaperone. The polypeptide is Chaperone protein DnaK (Prochlorococcus marinus (strain MIT 9515)).